Reading from the N-terminus, the 249-residue chain is Aquaporin TIP4-1 (249 aa).

Methionine 1 carries the N-acetylmethionine modification. The Cytoplasmic segment spans residues 1–20 (MKKIELGHHSEAAKPDCIKA). Lysine 3 bears the N6,N6-dimethyllysine mark. A helical transmembrane segment spans residues 21–41 (LIVEFITTFLFVFAGVGSAMA). The Vacuolar portion of the chain corresponds to 42 to 49 (TDSLVGNT). The helical transmembrane segment at 50 to 70 (LVGLFAVAVAHAFVVAVMISA) threads the bilayer. The Cytoplasmic segment spans residues 71 to 105 (GHISGGHLNPAVTLGLLLGGHISVFRAFLYWIDQL). Residues 79–81 (NPA) carry the NPA 1 motif. A helical membrane pass occupies residues 106–126 (LASSAACFLLSYLTGGMGTPV). The Vacuolar segment spans residues 127–137 (HTLASGVSYTQ). A helical transmembrane segment spans residues 138 to 158 (GIIWEIILTFSLLFTVYATIV). At 159 to 166 (DPKKGSLD) the chain is on the cytoplasmic side. A helical transmembrane segment spans residues 167–187 (GFGPLLTGFVVGANILAGGAF). Residues 188–212 (SGASMNPARSFGPALVSGNWTDHWV) lie on the Vacuolar side of the membrane. Residues 193–195 (NPA) carry the NPA 2 motif. A helical transmembrane segment spans residues 213-233 (YWVGPLIGGGLAGFIYENVLI). Over 234-249 (DRPHVPVADDEQPLLN) the chain is Cytoplasmic.

The protein belongs to the MIP/aquaporin (TC 1.A.8) family. TIP (TC 1.A.8.10) subfamily. Expressed in roots.

The protein resides in the vacuole membrane. In terms of biological role, aquaporins facilitate the transport of water and small neutral solutes across cell membranes. Transports urea in yeast cells in a pH-independent manner. The sequence is that of Aquaporin TIP4-1 (TIP4-1) from Arabidopsis thaliana (Mouse-ear cress).